The following is a 670-amino-acid chain: Solute carrier organic anion transporter family member 1A6 (670 aa).

Residues 1-20 (MGEPEKRAGTHGIRCFAKIK) are Cytoplasmic-facing. The chain crosses the membrane as a helical span at residues 21-40 (VFLLALTWAYASKALSATYM). Topologically, residues 41-59 (NSMLTQIERRFNISTSIVG) are extracellular. An N-linked (GlcNAc...) asparagine glycan is attached at N52. Residues 60–80 (LINGSFEVGNLLLIIFVSYFG) traverse the membrane as a helical segment. At 81–86 (RKRHRP) the chain is on the cytoplasmic side. The helical transmembrane segment at 87–111 (IMIGIGCAVMGLGCFIISLPHFLMG) threads the bilayer. The Extracellular portion of the chain corresponds to 112 to 155 (RYEYETTISPTSNLSSNSFLCMENRTQTLKPTQDPAECVKEMKS). Residues N124 and N135 are each glycosylated (N-linked (GlcNAc...) asparagine). A helical membrane pass occupies residues 156–184 (LMWIYVLVGNIIRGIGETPIMPLGISYIE). Over 185 to 203 (DFAKSENSPFYIGILEVGK) the chain is Cytoplasmic. The chain crosses the membrane as a helical span at residues 204 to 224 (ITGPIAAIWLGSFCATIYVDM). Residues 225-242 (GSVNTDDLTITPTDTRCV) are Extracellular-facing. The chain crosses the membrane as a helical span at residues 243–267 (GAWWIGFLVCAGLNILISIPFFFFP). The Cytoplasmic portion of the chain corresponds to 268–311 (KTFPKEGPEDMANETKNDEGDKHREKAKEEKRGITKDFFLFMKS). A disordered region spans residues 276–295 (EDMANETKNDEGDKHREKAK). Residues 312 to 333 (LSCNPIYMLCVLTSVLQVNGFV) form a helical membrane-spanning segment. Topologically, residues 334–353 (SIFTFKPKYLEHHYGKSSSE) are extracellular. A helical transmembrane segment spans residues 354-377 (AIFLMGLYTLPSVCVGYLISGFIM). Residues 378–381 (KKFK) lie on the Cytoplasmic side of the membrane. The helical transmembrane segment at 382–405 (ITLKKAAFISYCLGMSECLLSLCN) threads the bilayer. Residues 406 to 513 (FMLTCDNVPI…PDCANKLQYF (108 aa)) lie on the Extracellular side of the membrane. Residues 433-488 (NTVLADCNTRCSCLTKTWDPVCGDNGLAYITPCLAGCEKSVGSGINMVLQDCSCIQ) form the Kazal-like domain. Cystine bridges form between C439-C469, C445-C465, and C454-C486. N492 carries N-linked (GlcNAc...) asparagine glycosylation. Residues 514–536 (LIITVFCSFFYSLSLIPGYMIFL) form a helical membrane-spanning segment. The Cytoplasmic portion of the chain corresponds to 537 to 545 (RCMKSEEKS). A helical membrane pass occupies residues 546 to 571 (LGIGLQAFCMRILGGILAPIYFGVLI). At 572 to 605 (DRTCLHWGTQKCGEPGACRTYEINSFRSIYLGLP) the chain is on the extracellular side. Residues 606–623 (AALRGSSYLPAFFILRLM) form a helical membrane-spanning segment. Topologically, residues 624 to 670 (RKFQFPGDINSPVTDHVEMMLTEKESEHTDVHRSPQVENDGELKTKL) are cytoplasmic. S634 carries the post-translational modification Phosphoserine. Residues 647 to 670 (KESEHTDVHRSPQVENDGELKTKL) form a disordered region.

This sequence belongs to the organo anion transporter (TC 2.A.60) family.

It is found in the cell membrane. May mediate the Na(+)-independent transport of organic anions. The polypeptide is Solute carrier organic anion transporter family member 1A6 (Slco1a6) (Rattus norvegicus (Rat)).